We begin with the raw amino-acid sequence, 437 residues long: Serine carboxypeptidase-like 10 (437 aa).

The signal sequence occupies residues 1–21 (MGSTLKHLLLLLLVLIRHVDS). 3 disulfides stabilise this stretch: C80/C327, C243/C257, and C281/C293. A glycan (N-linked (GlcNAc...) asparagine) is linked at N101. The active site involves S175. An N-linked (GlcNAc...) asparagine glycan is attached at N328. D362 is an active-site residue. The N-linked (GlcNAc...) asparagine glycan is linked to N378. H415 is an active-site residue. Residue N422 is glycosylated (N-linked (GlcNAc...) asparagine).

The protein belongs to the peptidase S10 family. Expressed in senescent leaves.

It is found in the secreted. Its function is as follows. Involved in the biosynthesis of sinapoylated anthocyanins. In Arabidopsis thaliana (Mouse-ear cress), this protein is Serine carboxypeptidase-like 10 (SCPL10).